Consider the following 895-residue polypeptide: Isoleucine--tRNA ligase (895 aa).

A 'HIGH' region motif is present at residues 57 to 67; sequence PYANGSIHVGH. Position 549 (glutamate 549) interacts with L-isoleucyl-5'-AMP. A 'KMSKS' region motif is present at residues 590-594; that stretch reads KMSKS. Lysine 593 contacts ATP. Zn(2+) is bound by residues cysteine 869, cysteine 872, cysteine 888, and cysteine 891.

This sequence belongs to the class-I aminoacyl-tRNA synthetase family. IleS type 1 subfamily. As to quaternary structure, monomer. It depends on Zn(2+) as a cofactor.

It is found in the cytoplasm. The catalysed reaction is tRNA(Ile) + L-isoleucine + ATP = L-isoleucyl-tRNA(Ile) + AMP + diphosphate. Functionally, catalyzes the attachment of isoleucine to tRNA(Ile). As IleRS can inadvertently accommodate and process structurally similar amino acids such as valine, to avoid such errors it has two additional distinct tRNA(Ile)-dependent editing activities. One activity is designated as 'pretransfer' editing and involves the hydrolysis of activated Val-AMP. The other activity is designated 'posttransfer' editing and involves deacylation of mischarged Val-tRNA(Ile). The chain is Isoleucine--tRNA ligase from Mycoplasma genitalium (strain ATCC 33530 / DSM 19775 / NCTC 10195 / G37) (Mycoplasmoides genitalium).